The following is a 161-amino-acid chain: 6,7-dimethyl-8-ribityllumazine synthase (161 aa).

5-amino-6-(D-ribitylamino)uracil contacts are provided by residues W31, 63-65 (SFE), and 85-87 (VVI). A (2S)-2-hydroxy-3-oxobutyl phosphate-binding site is contributed by 90 to 91 (GT). H93 functions as the Proton donor in the catalytic mechanism. A 5-amino-6-(D-ribitylamino)uracil-binding site is contributed by F118. R132 lines the (2S)-2-hydroxy-3-oxobutyl phosphate pocket.

The protein belongs to the DMRL synthase family.

It carries out the reaction (2S)-2-hydroxy-3-oxobutyl phosphate + 5-amino-6-(D-ribitylamino)uracil = 6,7-dimethyl-8-(1-D-ribityl)lumazine + phosphate + 2 H2O + H(+). It participates in cofactor biosynthesis; riboflavin biosynthesis; riboflavin from 2-hydroxy-3-oxobutyl phosphate and 5-amino-6-(D-ribitylamino)uracil: step 1/2. In terms of biological role, catalyzes the formation of 6,7-dimethyl-8-ribityllumazine by condensation of 5-amino-6-(D-ribitylamino)uracil with 3,4-dihydroxy-2-butanone 4-phosphate. This is the penultimate step in the biosynthesis of riboflavin. The sequence is that of 6,7-dimethyl-8-ribityllumazine synthase from Arthrobacter sp. (strain FB24).